Reading from the N-terminus, the 53-residue chain is Temporin-SHd (53 aa).

The N-terminal stretch at 1 to 10 is a signal peptide; that stretch reads FLGTINLSLC. The propeptide occupies 11-34; the sequence is EQERDADEEKRDEPDESDVEVEKR. Phe-51 is modified (phenylalanine amide).

It localises to the secreted. Its subcellular location is the target cell membrane. Non-amphipathic mildly cationic alpha-helical antimicrobial peptide with potent activity against Gram-positive (including methicillin-resistant Staphylococcus aureus (MRSA)) and Gram-negative bacteria, and some fungi, as well as against Trypanosoma and Leishmania (both promastigote and amastigote forms). Strongly and selectively perturbs anionic bilayer membranes by interacting with the polar head groups and acyl region of the phospholipids, with formation of regions of two coexisting phases, one phase rich in peptide and the other lipid-rich. Shows low hemolytic activity (LC(50)=44 uM) and a low toxicity for human monocytes THP-1 and THP-1-derived macrophages. Is not toxic to human hepatoma-derived cells. This chain is Temporin-SHd, found in Pelophylax saharicus (Sahara frog).